We begin with the raw amino-acid sequence, 185 residues long: dCTP deaminase (185 aa).

DCTP is bound by residues 108–113, 132–134, Gln153, Tyr167, and Gln177; these read KSTYAR and TLE. The active-site Proton donor/acceptor is the Glu134.

It belongs to the dCTP deaminase family. As to quaternary structure, homotrimer.

It carries out the reaction dCTP + H2O + H(+) = dUTP + NH4(+). It functions in the pathway pyrimidine metabolism; dUMP biosynthesis; dUMP from dCTP (dUTP route): step 1/2. Catalyzes the deamination of dCTP to dUTP. In Pelagibacter ubique (strain HTCC1062), this protein is dCTP deaminase.